The primary structure comprises 128 residues: MAKLTTEELIEAFKELSLIELSDFVKAFEETFDVTAAAPVAVAGAAPAAGDAGAAEEEKTEFDVVLESAGDKKIQVIKEVRGLTSLGLKEAKDLVDSAPKAVLEGATKEAADKAKEALEGAGATVTVK.

Belongs to the bacterial ribosomal protein bL12 family. Homodimer. Part of the ribosomal stalk of the 50S ribosomal subunit. Forms a multimeric L10(L12)X complex, where L10 forms an elongated spine to which 2 to 4 L12 dimers bind in a sequential fashion. Binds GTP-bound translation factors.

Functionally, forms part of the ribosomal stalk which helps the ribosome interact with GTP-bound translation factors. Is thus essential for accurate translation. This Kocuria rhizophila (strain ATCC 9341 / DSM 348 / NBRC 103217 / DC2201) protein is Large ribosomal subunit protein bL12.